A 365-amino-acid polypeptide reads, in one-letter code: Aminomethyltransferase (365 aa).

It belongs to the GcvT family. As to quaternary structure, the glycine cleavage system is composed of four proteins: P, T, L and H.

The catalysed reaction is N(6)-[(R)-S(8)-aminomethyldihydrolipoyl]-L-lysyl-[protein] + (6S)-5,6,7,8-tetrahydrofolate = N(6)-[(R)-dihydrolipoyl]-L-lysyl-[protein] + (6R)-5,10-methylene-5,6,7,8-tetrahydrofolate + NH4(+). In terms of biological role, the glycine cleavage system catalyzes the degradation of glycine. The chain is Aminomethyltransferase from Cronobacter sakazakii (strain ATCC BAA-894) (Enterobacter sakazakii).